Here is a 215-residue protein sequence, read N- to C-terminus: 2-phospho-L-lactate guanylyltransferase (215 aa).

The protein belongs to the CofC family. In terms of assembly, homodimer.

It catalyses the reaction (2S)-2-phospholactate + GTP + H(+) = (2S)-lactyl-2-diphospho-5'-guanosine + diphosphate. The protein operates within cofactor biosynthesis; coenzyme F420 biosynthesis. In terms of biological role, guanylyltransferase that catalyzes the activation of (2S)-2-phospholactate (2-PL) as (2S)-lactyl-2-diphospho-5'-guanosine, via the condensation of 2-PL with GTP. It is involved in the biosynthesis of coenzyme F420, a hydride carrier cofactor. The chain is 2-phospho-L-lactate guanylyltransferase from Methanoculleus marisnigri (strain ATCC 35101 / DSM 1498 / JR1).